The primary structure comprises 127 residues: Fluoride-specific ion channel FluC 1 (127 aa).

Helical transmembrane passes span 3 to 23 (LLIV…VGQW), 35 to 55 (IAML…FGLY), 74 to 94 (IGFF…VLLI), and 102 to 122 (LFSY…LGFY). Na(+) is bound by residues Gly-78 and Thr-81.

It belongs to the fluoride channel Fluc/FEX (TC 1.A.43) family.

The protein resides in the cell membrane. The catalysed reaction is fluoride(in) = fluoride(out). With respect to regulation, na(+) is not transported, but it plays an essential structural role and its presence is essential for fluoride channel function. In terms of biological role, fluoride-specific ion channel. Important for reducing fluoride concentration in the cell, thus reducing its toxicity. This chain is Fluoride-specific ion channel FluC 1, found in Halalkalibacterium halodurans (strain ATCC BAA-125 / DSM 18197 / FERM 7344 / JCM 9153 / C-125) (Bacillus halodurans).